An 801-amino-acid chain; its full sequence is PR domain zinc finger protein 4 (801 aa).

Residues 412 to 529 (KQLVLRQSIV…PENELLFYYS (118 aa)) form the SET domain. The C2H2-type 1; atypical zinc finger occupies 545–566 (HLCNCGKECNSYTEFKAHLTSH). C2H2-type zinc fingers lie at residues 618–640 (HKCD…LKIH), 646–668 (YRCT…MVIH), 674–696 (LKCD…VLIH), and 702–724 (IKCP…LNSH). The C2H2-type 6; atypical zinc-finger motif lies at 730 to 752 (YVCEKCTKAYLTKYHLTRHLKTC). Positions 751 to 782 (TCKGPTSSSSAPEEEEEDDSEEEDLADSVGTE) are disordered. The segment covering 762–776 (PEEEEEDDSEEEDLA) has biased composition (acidic residues).

Belongs to the class V-like SAM-binding methyltransferase superfamily.

It is found in the nucleus. Its function is as follows. May function as a transcription factor involved in cell differentiation. The chain is PR domain zinc finger protein 4 (PRDM4) from Pongo abelii (Sumatran orangutan).